The primary structure comprises 149 residues: Pleckstrin homology domain-containing family J member 1 (149 aa).

The 94-residue stretch at 15–108 (PAEMAAELGM…WMAALRQASY (94 aa)) folds into the PH domain.

This Bos taurus (Bovine) protein is Pleckstrin homology domain-containing family J member 1 (PLEKHJ1).